A 217-amino-acid polypeptide reads, in one-letter code: Probable GTP-binding protein EngB (217 aa).

Positions D37–E214 constitute an EngB-type G domain. GTP contacts are provided by residues G45–S52, G72–E76, D92–G95, T159–D162, and T193–S195. Positions 52 and 74 each coordinate Mg(2+).

Belongs to the TRAFAC class TrmE-Era-EngA-EngB-Septin-like GTPase superfamily. EngB GTPase family. The cofactor is Mg(2+).

Necessary for normal cell division and for the maintenance of normal septation. This Bradyrhizobium diazoefficiens (strain JCM 10833 / BCRC 13528 / IAM 13628 / NBRC 14792 / USDA 110) protein is Probable GTP-binding protein EngB.